A 473-amino-acid chain; its full sequence is H(+)/Cl(-) exchange transporter ClcA (473 aa).

Over 1-32 (MKTDTSTFLAQQIVRLRRRDQIRRLMQRDKTP) the chain is Cytoplasmic. The chain crosses the membrane as a helical span at residues 33 to 69 (LAILFMAAVVGTLTGLVGVAFEKTVSWVQNMRIGALV). Residues 70–76 (QVADHAF) lie on the Periplasmic side of the membrane. The chain crosses the membrane as a helical span at residues 77–100 (LLWPLAFILSALLAMVGYFLVRKF). Positions 106-110 (GSGIP) match the Selectivity filter part_1 motif. Residue S107 coordinates chloride. The segment at residues 109 to 116 (IPEIEGAL) is an intramembrane region (helical). The Cytoplasmic segment spans residues 117 to 123 (EELRPVR). The next 2 helical transmembrane spans lie at 124–141 (WWRVLPVKFIGGMGTLGA) and 148–166 (EGPTVQIGGNLGRMVLDVF). Positions 146 to 150 (GREGP) match the Selectivity filter part_2 motif. At 167-176 (RMRSAEARHT) the chain is on the cytoplasmic side. Intramembrane regions (helical) lie at residues 177–189 (LLATGAAAGLSAA) and 193–201 (PLAGILFII). At 202–214 (EEMRPQFRYNLIS) the chain is on the cytoplasmic side. A helical membrane pass occupies residues 215–232 (IKAVFTGVIMSSIVFRIF). At 233–252 (NGEAPIIEVGKLSDAPVNTL) the chain is on the periplasmic side. A helical membrane pass occupies residues 253–281 (WLYLILGIIFGCVGPVFNSLVLRTQDMFQ). The Cytoplasmic portion of the chain corresponds to 282–287 (RFHGGE). Residues 288 to 309 (IKKWVLMGGAIGGLCGILGLIE) form a helical membrane-spanning segment. At 310 to 329 (PAAAGGGFNLIPIAAAGNFS) the chain is on the periplasmic side. The next 2 helical transmembrane spans lie at 330–349 (VGLLLFIFITRVVTTLLCFS) and 355–376 (GIFAPMLALGTLLGTAFGMAAA). Residues 355-359 (GIFAP) carry the Selectivity filter part_3 motif. The chloride site is built by I356 and F357. The Periplasmic portion of the chain corresponds to 377-386 (VLFPQYHPEA). An intramembrane region (helical) is located at residues 387-401 (GTFAIAGMGALMAAS). The note=Loop between two helices intramembrane region spans 402–404 (VRA). The helical intramembrane region spans 405–416 (PLTGIVLVLEMT). Positions 417–421 (DNYQL) form an intramembrane region, note=Loop between two helices. The chain crosses the membrane as a helical span at residues 422–438 (ILPMIITCLGATLLAQF). At 439–473 (LGGKPLYSTILARTLAKQDAEQAAKNQNAPAGENT) the chain is on the cytoplasmic side. Residue Y445 coordinates chloride.

It belongs to the chloride channel (TC 2.A.49) family. ClcA subfamily. In terms of assembly, homodimer.

It is found in the cell inner membrane. It carries out the reaction 2 chloride(in) + H(+)(out) = 2 chloride(out) + H(+)(in). Proton-coupled chloride transporter. Functions as antiport system and exchanges two chloride ions for 1 proton. Probably acts as an electrical shunt for an outwardly-directed proton pump that is linked to amino acid decarboxylation, as part of the extreme acid resistance (XAR) response. This is H(+)/Cl(-) exchange transporter ClcA from Salmonella paratyphi A (strain AKU_12601).